Reading from the N-terminus, the 410-residue chain is uncharacterized protein (410 aa).

Zn(2+) is bound at residue His-87. The active site involves Asp-89. Asp-120 contacts Zn(2+). Glu-154 acts as the Proton acceptor in catalysis. Zn(2+) is bound by residues Glu-155, Asp-184, and His-387.

It belongs to the peptidase M20A family. It depends on Zn(2+) as a cofactor. Requires Co(2+) as cofactor.

This is an uncharacterized protein from Methanocaldococcus jannaschii (strain ATCC 43067 / DSM 2661 / JAL-1 / JCM 10045 / NBRC 100440) (Methanococcus jannaschii).